The chain runs to 654 residues: Probable protein phosphatase 2C 23 (654 aa).

Positions 11-30 (CLTGGAGRNKKPELSILEPD) are disordered. Phosphoserine is present on Ser-147. Residues 243–645 (DVSLESQNLQ…DDVSIVVISL (403 aa)) enclose the PPM-type phosphatase domain. Mn(2+) contacts are provided by Asp-280 and Gly-281. The interval 309 to 336 (DDPKTDAKSSDEADVENRDSSSEKKSKN) is disordered. The Mn(2+) site is built by Asp-573 and Asp-636.

This sequence belongs to the PP2C family. Requires Mg(2+) as cofactor. Mn(2+) is required as a cofactor. In terms of tissue distribution, expressed in seedlings, roots, leaves, stems, young inflorescences, flowers and siliques.

The protein resides in the nucleus. It catalyses the reaction O-phospho-L-seryl-[protein] + H2O = L-seryl-[protein] + phosphate. The catalysed reaction is O-phospho-L-threonyl-[protein] + H2O = L-threonyl-[protein] + phosphate. Involved in leaf development regulation. This Arabidopsis thaliana (Mouse-ear cress) protein is Probable protein phosphatase 2C 23 (PLL4).